We begin with the raw amino-acid sequence, 283 residues long: Urease accessory protein UreD (283 aa).

The tract at residues 1–20 is disordered; sequence MTQTQPVGTLRLTIDDQGPQ.

Belongs to the UreD family. UreD, UreF and UreG form a complex that acts as a GTP-hydrolysis-dependent molecular chaperone, activating the urease apoprotein by helping to assemble the nickel containing metallocenter of UreC. The UreE protein probably delivers the nickel.

Its subcellular location is the cytoplasm. Functionally, required for maturation of urease via the functional incorporation of the urease nickel metallocenter. The protein is Urease accessory protein UreD of Corynebacterium glutamicum (strain R).